The primary structure comprises 319 residues: Ferrochelatase (319 aa).

Residues His192 and Glu271 each contribute to the Fe cation site.

It belongs to the ferrochelatase family.

It localises to the cytoplasm. It catalyses the reaction heme b + 2 H(+) = protoporphyrin IX + Fe(2+). The protein operates within porphyrin-containing compound metabolism; protoheme biosynthesis; protoheme from protoporphyrin-IX: step 1/1. Catalyzes the ferrous insertion into protoporphyrin IX. The polypeptide is Ferrochelatase (Geotalea daltonii (strain DSM 22248 / JCM 15807 / FRC-32) (Geobacter daltonii)).